The chain runs to 545 residues: Chaperonin GroEL 2 (545 aa).

ATP-binding positions include 29–32 (TLGP), 86–90 (DGTTT), Gly413, 477–479 (DAA), and Asp493. The interval 526-545 (PEPAAAGHGHGHGHQHGPGF) is disordered. Basic residues predominate over residues 534-545 (GHGHGHQHGPGF).

The protein belongs to the chaperonin (HSP60) family. As to quaternary structure, forms a cylinder of 14 subunits composed of two heptameric rings stacked back-to-back. Interacts with the co-chaperonin GroES.

It localises to the cytoplasm. It carries out the reaction ATP + H2O + a folded polypeptide = ADP + phosphate + an unfolded polypeptide.. Its function is as follows. Together with its co-chaperonin GroES, plays an essential role in assisting protein folding. The GroEL-GroES system forms a nano-cage that allows encapsulation of the non-native substrate proteins and provides a physical environment optimized to promote and accelerate protein folding. In Salinispora arenicola (strain CNS-205), this protein is Chaperonin GroEL 2.